A 137-amino-acid polypeptide reads, in one-letter code: Small ribosomal subunit protein uS12 (137 aa).

Residues 1 to 23 (MPTINQLVRKGRKSKSSKSDAPA) are disordered. Asp102 is subject to 3-methylthioaspartic acid.

Belongs to the universal ribosomal protein uS12 family. As to quaternary structure, part of the 30S ribosomal subunit. Contacts proteins S8 and S17. May interact with IF1 in the 30S initiation complex.

With S4 and S5 plays an important role in translational accuracy. In terms of biological role, interacts with and stabilizes bases of the 16S rRNA that are involved in tRNA selection in the A site and with the mRNA backbone. Located at the interface of the 30S and 50S subunits, it traverses the body of the 30S subunit contacting proteins on the other side and probably holding the rRNA structure together. The combined cluster of proteins S8, S12 and S17 appears to hold together the shoulder and platform of the 30S subunit. The protein is Small ribosomal subunit protein uS12 of Levilactobacillus brevis (strain ATCC 367 / BCRC 12310 / CIP 105137 / JCM 1170 / LMG 11437 / NCIMB 947 / NCTC 947) (Lactobacillus brevis).